The sequence spans 260 residues: Cytosolic Fe-S cluster assembly factor Nubp2 homolog (260 aa).

14–21 (GKGGVGKS) provides a ligand contact to ATP. Residues Cys-188 and Cys-191 each coordinate [4Fe-4S] cluster.

It belongs to the Mrp/NBP35 ATP-binding proteins family. NUBP2/CFD1 subfamily. In terms of assembly, heterotetramer of 2 Nubp1 and 2 Nubp2 chains. It depends on [4Fe-4S] cluster as a cofactor.

Its subcellular location is the cytoplasm. Its function is as follows. Component of the cytosolic iron-sulfur (Fe/S) protein assembly (CIA) machinery. Required for maturation of extramitochondrial Fe-S proteins. The Nubp1-Nubp2 heterotetramer forms a Fe-S scaffold complex, mediating the de novo assembly of an Fe-S cluster and its transfer to target apoproteins. In Drosophila erecta (Fruit fly), this protein is Cytosolic Fe-S cluster assembly factor Nubp2 homolog.